A 79-amino-acid polypeptide reads, in one-letter code: uncharacterized protein (79 aa).

This is an uncharacterized protein from Listeria innocua serovar 6a (strain ATCC BAA-680 / CLIP 11262).